The following is an 860-amino-acid chain: DDB1- and CUL4-associated factor 6 (860 aa).

WD repeat units follow at residues 49 to 88 (VHDG…VLTT), 92 to 133 (GHRA…ETNR), 139 to 179 (CHYG…SCTK), 189 to 229 (NCRR…TRAT), and 251 to 290 (NKSC…AREL). 2 stretches are compositionally biased toward basic and acidic residues: residues 288-303 (RELK…EELR) and 312-334 (LRGD…RDGE). Disordered regions lie at residues 288–340 (RELK…PNVS), 355–392 (EASE…SPDL), 407–490 (QFLQ…TTST), and 502–675 (IASS…GPGD). Ser336 is modified (phosphoserine). 2 stretches are compositionally biased toward polar residues: residues 379–388 (DISTLPTVPS) and 409–421 (LQPS…SAQA). Positions 422-441 (HSTSSPTESPHSTPLLSSPD) are enriched in low complexity. Over residues 457–467 (HQSDNNNEKLS) the composition is skewed to basic and acidic residues. Residues 480–490 (HYSTEGTTTST) show a composition bias toward polar residues. The segment covering 502 to 511 (IASSSRGIGS) has biased composition (low complexity). Over residues 535 to 549 (SETKAPEESSEDVTK) the composition is skewed to basic and acidic residues. Positions 614 to 626 (TSTESATNENNTN) are enriched in low complexity. Polar residues predominate over residues 627–636 (PEPQFQTEAT). A Phosphoserine modification is found at Ser649. At Thr654 the chain carries Phosphothreonine. Ser657 bears the Phosphoserine mark. An IQ domain is found at 676–705 (RRSAVARIQEFFRRRKERKEMEELDTLNIR). WD repeat units lie at residues 718–756 (NSRT…HLML) and 759–798 (ADNH…RIFN). Ser847 and Ser850 each carry phosphoserine.

Interacts with the nuclear receptors NR3C1 and AR in the presence of ligand. Interacts with DDB1, CUL4A and CUL4B. In terms of tissue distribution, highly expressed in skeletal muscle and testis. Expressed to a lesser degree in heart, prostate, and adrenal gland.

The protein resides in the nucleus. The protein operates within protein modification; protein ubiquitination. Its function is as follows. Ligand-dependent coactivator of nuclear receptors. Enhance transcriptional activity of the nuclear receptors NR3C1 and AR. May function as a substrate receptor for CUL4-DDB1 E3 ubiquitin-protein ligase complex. This chain is DDB1- and CUL4-associated factor 6 (DCAF6), found in Homo sapiens (Human).